The sequence spans 450 residues: MRLSRYFMPVLKEDPKEAQIVSHRLMLRAGMIKQQAAGIYSWLPLGYKVLRRIEQIVHEEQARAGHIAMLMPTLQSADLWRESGRYDDYGEEMLRIKDRHKRDLLYGPTNEEMITDIFRSHVNSYKDLPLTLYHVQWKFRDEIRPRFGVMRGREFLMKDGYNFDLTKEDALHAYNRHLVSYLRTYERMGLQAIPMRADGGPIGGDYTHEFLVLAETGESEVFYDSEITDLKFGDRRIDYDDVAQCRAVLEEFTSRYARTDETHDAALFEQIPKERRRVARGIEVGQIFYFGTKYSEPMGATVVGPDGSRVPVHMGSHGIGVSRLLGAIIEASHDDRGIIWPEGVTPFHVGIVNLKQGDASTDGACEALYAELKAQGLDALYDDRDERAGAKFATMDLVGLPWRITVGPRGLAANKVELTSRRTGESVEMSPQEAVVRLREIYQPVFDAAK.

This sequence belongs to the class-II aminoacyl-tRNA synthetase family. ProS type 2 subfamily. As to quaternary structure, homodimer.

Its subcellular location is the cytoplasm. The catalysed reaction is tRNA(Pro) + L-proline + ATP = L-prolyl-tRNA(Pro) + AMP + diphosphate. Its function is as follows. Catalyzes the attachment of proline to tRNA(Pro) in a two-step reaction: proline is first activated by ATP to form Pro-AMP and then transferred to the acceptor end of tRNA(Pro). The polypeptide is Proline--tRNA ligase (Paracoccus denitrificans (strain Pd 1222)).